Here is a 397-residue protein sequence, read N- to C-terminus: Zinc finger CCCH domain-containing protein 33 (397 aa).

5 C3H1-type zinc fingers span residues 40–68 (RPGEPDCSYYIRTGLCRFGSTCRFNHPRD), 85–113 (RIGQPECEYYLKTGTCKFGVTCKFHHPRN), 131–159 (RSNEVDCAYFLRTGHCKFGGTCKFNHPQP), 274–302 (RPGQPECQFYMKTGDCKFGTVCKFHHPRD), and 320–348 (RPGEPLCVFYTRYGICKFGPSCKFDHPMR). Residues 361 to 397 (EVVETSTGKSRRLSVSETRQAATTSSGKDTTIDNTQQ) are disordered. Residues 364–397 (ETSTGKSRRLSVSETRQAATTSSGKDTTIDNTQQ) show a composition bias toward polar residues.

The protein localises to the nucleus. This is Zinc finger CCCH domain-containing protein 33 (ZFN1) from Arabidopsis thaliana (Mouse-ear cress).